Reading from the N-terminus, the 195-residue chain is Small ribosomal subunit protein uS4c (195 aa).

The S4 RNA-binding domain occupies 82–143; sequence MRLDNILFRL…KQRSKALIQN (62 aa).

The protein belongs to the universal ribosomal protein uS4 family. In terms of assembly, part of the 30S ribosomal subunit. Contacts protein S5. The interaction surface between S4 and S5 is involved in control of translational fidelity.

Its subcellular location is the plastid. The protein resides in the chloroplast. Its function is as follows. One of the primary rRNA binding proteins, it binds directly to 16S rRNA where it nucleates assembly of the body of the 30S subunit. Functionally, with S5 and S12 plays an important role in translational accuracy. This is Small ribosomal subunit protein uS4c (rps4) from Pillansia templemannii.